The primary structure comprises 96 residues: Small ribosomal subunit protein bS6 (96 aa).

The protein belongs to the bacterial ribosomal protein bS6 family.

Its function is as follows. Binds together with bS18 to 16S ribosomal RNA. The sequence is that of Small ribosomal subunit protein bS6 from Synechococcus sp. (strain JA-2-3B'a(2-13)) (Cyanobacteria bacterium Yellowstone B-Prime).